Reading from the N-terminus, the 471-residue chain is Proline--tRNA ligase (471 aa).

Belongs to the class-II aminoacyl-tRNA synthetase family. ProS type 3 subfamily. Homodimer.

It localises to the cytoplasm. The catalysed reaction is tRNA(Pro) + L-proline + ATP = L-prolyl-tRNA(Pro) + AMP + diphosphate. Catalyzes the attachment of proline to tRNA(Pro) in a two-step reaction: proline is first activated by ATP to form Pro-AMP and then transferred to the acceptor end of tRNA(Pro). This Archaeoglobus fulgidus (strain ATCC 49558 / DSM 4304 / JCM 9628 / NBRC 100126 / VC-16) protein is Proline--tRNA ligase.